We begin with the raw amino-acid sequence, 202 residues long: Glycerol-3-phosphate acyltransferase (202 aa).

The next 4 helical transmembrane spans lie at 11–31, 87–107, 116–136, and 158–178; these read VLIA…GLIL, PALA…WLGF, FIGV…AIWL, and LILW…LAAL.

It belongs to the PlsY family. As to quaternary structure, probably interacts with PlsX.

The protein localises to the cell inner membrane. The enzyme catalyses an acyl phosphate + sn-glycerol 3-phosphate = a 1-acyl-sn-glycero-3-phosphate + phosphate. It participates in lipid metabolism; phospholipid metabolism. Functionally, catalyzes the transfer of an acyl group from acyl-phosphate (acyl-PO(4)) to glycerol-3-phosphate (G3P) to form lysophosphatidic acid (LPA). This enzyme utilizes acyl-phosphate as fatty acyl donor, but not acyl-CoA or acyl-ACP. The polypeptide is Glycerol-3-phosphate acyltransferase (Methylorubrum extorquens (strain PA1) (Methylobacterium extorquens)).